Here is a 254-residue protein sequence, read N- to C-terminus: 3-deoxy-manno-octulosonate cytidylyltransferase (254 aa).

The protein belongs to the KdsB family.

The protein resides in the cytoplasm. The enzyme catalyses 3-deoxy-alpha-D-manno-oct-2-ulosonate + CTP = CMP-3-deoxy-beta-D-manno-octulosonate + diphosphate. The protein operates within nucleotide-sugar biosynthesis; CMP-3-deoxy-D-manno-octulosonate biosynthesis; CMP-3-deoxy-D-manno-octulosonate from 3-deoxy-D-manno-octulosonate and CTP: step 1/1. It participates in bacterial outer membrane biogenesis; lipopolysaccharide biosynthesis. In terms of biological role, activates KDO (a required 8-carbon sugar) for incorporation into bacterial lipopolysaccharide in Gram-negative bacteria. This is 3-deoxy-manno-octulosonate cytidylyltransferase from Bordetella pertussis (strain Tohama I / ATCC BAA-589 / NCTC 13251).